The chain runs to 482 residues: Sugar transporter ERD6-like 16 (482 aa).

Helical transmembrane passes span 42 to 62 (LMVL…GSCV), 80 to 100 (LAEF…GAVM), 117 to 137 (SACF…ALLL), 142 to 162 (FFTG…IAEI), 173 to 193 (TLNQ…GSLI), 197 to 217 (TLAL…CFIP), 280 to 300 (VIIG…GIGF), 316 to 336 (LGTI…TILI), 344 to 364 (LIMI…TSFL), 382 to 402 (GVLI…WVIM), 413 to 433 (IAGS…SYTF), and 443 to 463 (GTFY…AKMV).

It belongs to the major facilitator superfamily. Sugar transporter (TC 2.A.1.1) family.

The protein localises to the membrane. Its function is as follows. Sugar transporter. This chain is Sugar transporter ERD6-like 16, found in Arabidopsis thaliana (Mouse-ear cress).